Consider the following 382-residue polypeptide: Dual-specificity RNA methyltransferase RlmN (382 aa).

Glu-95 acts as the Proton acceptor in catalysis. Residues 101–348 (EDDRGTLCIS…TTVRKTRGDD (248 aa)) form the Radical SAM core domain. Cys-108 and Cys-353 are joined by a disulfide. Cys-115, Cys-119, and Cys-122 together coordinate [4Fe-4S] cluster. Residues 179 to 180 (GE), Ser-211, 233 to 235 (SLH), and Asn-310 contribute to the S-adenosyl-L-methionine site. Residue Cys-353 is the S-methylcysteine intermediate of the active site.

The protein belongs to the radical SAM superfamily. RlmN family. [4Fe-4S] cluster is required as a cofactor.

The protein localises to the cytoplasm. The enzyme catalyses adenosine(2503) in 23S rRNA + 2 reduced [2Fe-2S]-[ferredoxin] + 2 S-adenosyl-L-methionine = 2-methyladenosine(2503) in 23S rRNA + 5'-deoxyadenosine + L-methionine + 2 oxidized [2Fe-2S]-[ferredoxin] + S-adenosyl-L-homocysteine. It carries out the reaction adenosine(37) in tRNA + 2 reduced [2Fe-2S]-[ferredoxin] + 2 S-adenosyl-L-methionine = 2-methyladenosine(37) in tRNA + 5'-deoxyadenosine + L-methionine + 2 oxidized [2Fe-2S]-[ferredoxin] + S-adenosyl-L-homocysteine. In terms of biological role, specifically methylates position 2 of adenine 2503 in 23S rRNA and position 2 of adenine 37 in tRNAs. m2A2503 modification seems to play a crucial role in the proofreading step occurring at the peptidyl transferase center and thus would serve to optimize ribosomal fidelity. The protein is Dual-specificity RNA methyltransferase RlmN of Bordetella parapertussis (strain 12822 / ATCC BAA-587 / NCTC 13253).